Here is a 391-residue protein sequence, read N- to C-terminus: Succinate--CoA ligase [ADP-forming] subunit beta (391 aa).

Residues 9–248 (KDILRKFGVA…ISEEDPFEVE (240 aa)) enclose the ATP-grasp domain. ATP-binding positions include Lys-50, 57-59 (GRG), Glu-103, Met-106, and Glu-111. Positions 203 and 217 each coordinate Mg(2+). Substrate is bound by residues Asn-268 and 325 to 327 (GIV).

It belongs to the succinate/malate CoA ligase beta subunit family. Heterotetramer of two alpha and two beta subunits. Mg(2+) serves as cofactor.

It catalyses the reaction succinate + ATP + CoA = succinyl-CoA + ADP + phosphate. The enzyme catalyses GTP + succinate + CoA = succinyl-CoA + GDP + phosphate. The protein operates within carbohydrate metabolism; tricarboxylic acid cycle; succinate from succinyl-CoA (ligase route): step 1/1. Succinyl-CoA synthetase functions in the citric acid cycle (TCA), coupling the hydrolysis of succinyl-CoA to the synthesis of either ATP or GTP and thus represents the only step of substrate-level phosphorylation in the TCA. The beta subunit provides nucleotide specificity of the enzyme and binds the substrate succinate, while the binding sites for coenzyme A and phosphate are found in the alpha subunit. This Chlorobium luteolum (strain DSM 273 / BCRC 81028 / 2530) (Pelodictyon luteolum) protein is Succinate--CoA ligase [ADP-forming] subunit beta.